Here is a 98-residue protein sequence, read N- to C-terminus: Small ribosomal subunit protein bS6 (98 aa).

This sequence belongs to the bacterial ribosomal protein bS6 family.

Functionally, binds together with bS18 to 16S ribosomal RNA. This Staphylococcus haemolyticus (strain JCSC1435) protein is Small ribosomal subunit protein bS6.